Consider the following 283-residue polypeptide: tRNA pseudouridine synthase B (283 aa).

Asp38 (nucleophile) is an active-site residue.

The protein belongs to the pseudouridine synthase TruB family. Type 1 subfamily.

The catalysed reaction is uridine(55) in tRNA = pseudouridine(55) in tRNA. Its function is as follows. Responsible for synthesis of pseudouridine from uracil-55 in the psi GC loop of transfer RNAs. This Onion yellows phytoplasma (strain OY-M) protein is tRNA pseudouridine synthase B.